A 507-amino-acid chain; its full sequence is Proton-coupled zinc antiporter SLC30A1 (507 aa).

The Cytoplasmic segment spans residues 1–10; it reads MGCWGRNRGR. A helical membrane pass occupies residues 11–31; sequence LLCMLLLTFMFMVLEVVVSRV. Residues 32 to 35 lie on the Extracellular side of the membrane; sequence TASL. Residues 36–56 traverse the membrane as a helical segment; the sequence is AMLSDSFHMLSDVLALVVALV. Positions 43 and 47 each coordinate Zn(2+). The Cytoplasmic portion of the chain corresponds to 57-78; sequence AERFARRTHATQKNTFGWIRAE. A helical transmembrane segment spans residues 79 to 99; sequence VMGALVNAIFLTGLCFAILLE. Topologically, residues 100 to 113 are extracellular; the sequence is AVERFIEPHEMQQP. Residues 114–134 traverse the membrane as a helical segment; that stretch reads LVVLSVGVAGLLVNVLGLCLF. Residues 135-247 are Cytoplasmic-facing; sequence HHHSGEGQGA…RAGQLNMRGV (113 aa). The segment at 140–218 is disordered; the sequence is EGQGAGHGHS…EKLRSDDPVD (79 aa). Residues 145–156 are 6 X 2 AA approximate repeats of H-G; it reads GHGHSHGHGHGH. The span at 147-165 shows a compositional bias: basic residues; that stretch reads GHSHGHGHGHLAKGARKAG. The segment covering 188-200 has biased composition (polar residues); it reads TNTLVANTSNSNG. Residues 204–215 are compositionally biased toward basic and acidic residues; that stretch reads DQAEPEKLRSDD. A helical membrane pass occupies residues 248–268; sequence FLHVLGDALGSVIVVVNALVF. Residues H250 and D254 each coordinate Zn(2+). Topologically, residues 269 to 307 are extracellular; it reads YFSWKGCTEDDFCVNPCFPDPCKSSVELMNSTQAPMHEA. N-linked (GlcNAc...) asparagine glycosylation is present at N298. Residues 308-328 traverse the membrane as a helical segment; it reads GPCWVLYLDPTLCIIMVCILL. The Cytoplasmic portion of the chain corresponds to 329–507; the sequence is YTTYPLLKES…VPNKQPESSL (179 aa). A Phosphoserine modification is found at S506.

It belongs to the cation diffusion facilitator (CDF) transporter (TC 2.A.4) family. SLC30A subfamily. Homodimer. Interacts with TMEM163. Interacts and forms a complex with TMC6 and TMC8; the interaction regulates zinc transport into the ER. In terms of tissue distribution, widely expressed. Detected in duodenum and jejunum but not in ileum and colon (at protein level). Expressed by neuroglial cells (at protein level).

The protein localises to the cell membrane. It localises to the basolateral cell membrane. It is found in the cytoplasmic vesicle membrane. The protein resides in the cytoplasm. Its subcellular location is the endoplasmic reticulum membrane. The protein localises to the golgi apparatus membrane. It localises to the nucleus membrane. It catalyses the reaction Zn(2+)(in) + 2 H(+)(out) = Zn(2+)(out) + 2 H(+)(in). Its activity is regulated as follows. Calcium-dependent. Zinc ion:proton antiporter that could function at the plasma membrane mediating zinc efflux from cells against its electrochemical gradient protecting them from intracellular zinc accumulation and toxicity. Alternatively, could prevent the transport to the plasma membrane of CACNB2, the L-type calcium channels regulatory subunit, through a yet to be defined mechanism. By modulating the expression of these channels at the plasma membrane, could prevent calcium and zinc influx into cells. By the same mechanism, could also prevent L-type calcium channels-mediated heavy metal influx into cells. In some cells, could also function as a zinc ion:proton antiporter mediating zinc entry into the lumen of cytoplasmic vesicles. In macrophages, can increase zinc ions concentration into the lumen of cytoplasmic vesicles containing engulfed bacteria and could help inactivate them. Forms a complex with TMC6/EVER1 and TMC8/EVER2 at the ER membrane of keratynocytes which facilitates zinc uptake into the ER. Down-regulates the activity of transcription factors induced by zinc and cytokines. The polypeptide is Proton-coupled zinc antiporter SLC30A1 (Rattus norvegicus (Rat)).